We begin with the raw amino-acid sequence, 139 residues long: von Hippel-Lindau-like protein (139 aa).

Positions 1-22 are disordered; sequence MPWRAGNGVGLEAQAGTQEAGP. The interval 54 to 135 is beta-domain; that stretch reads SRIIICNHSP…GQPVFANITL (82 aa).

Belongs to the VHL family. As to quaternary structure, interacts via the beta domain with the ODD domain of HIF1A. This interaction is independent of prolyl hydroxylation of HIF1A. In terms of tissue distribution, abundantly expressed in the placenta.

In terms of biological role, functions as a dominant-negative VHL to serve as a protector of HIFalpha. The polypeptide is von Hippel-Lindau-like protein (VHLL) (Homo sapiens (Human)).